A 642-amino-acid chain; its full sequence is Threonine--tRNA ligase (642 aa).

The TGS domain occupies 1–61 (MPIITLPDGS…EEDASLEIIT (61 aa)). Residues 244-535 (DHRKIGKQLD…LIEEYAGFFP (292 aa)) form a catalytic region. Residues C335, H386, and H512 each contribute to the Zn(2+) site.

It belongs to the class-II aminoacyl-tRNA synthetase family. In terms of assembly, homodimer. Zn(2+) is required as a cofactor.

Its subcellular location is the cytoplasm. The catalysed reaction is tRNA(Thr) + L-threonine + ATP = L-threonyl-tRNA(Thr) + AMP + diphosphate + H(+). Functionally, catalyzes the attachment of threonine to tRNA(Thr) in a two-step reaction: L-threonine is first activated by ATP to form Thr-AMP and then transferred to the acceptor end of tRNA(Thr). Also edits incorrectly charged L-seryl-tRNA(Thr). The chain is Threonine--tRNA ligase from Vibrio vulnificus (strain YJ016).